We begin with the raw amino-acid sequence, 208 residues long: 3-isopropylmalate dehydratase small subunit 2 (208 aa).

The protein belongs to the LeuD family. LeuD type 1 subfamily. In terms of assembly, heterodimer of LeuC and LeuD.

It carries out the reaction (2R,3S)-3-isopropylmalate = (2S)-2-isopropylmalate. It functions in the pathway amino-acid biosynthesis; L-leucine biosynthesis; L-leucine from 3-methyl-2-oxobutanoate: step 2/4. Its function is as follows. Catalyzes the isomerization between 2-isopropylmalate and 3-isopropylmalate, via the formation of 2-isopropylmaleate. The sequence is that of 3-isopropylmalate dehydratase small subunit 2 (leuD2) from Salmonella typhimurium (strain LT2 / SGSC1412 / ATCC 700720).